We begin with the raw amino-acid sequence, 383 residues long: S-adenosylmethionine synthase (383 aa).

Residue His15 participates in ATP binding. A Mg(2+)-binding site is contributed by Asp17. Glu43 contributes to the K(+) binding site. Positions 56 and 99 each coordinate L-methionine. A flexible loop region spans residues 99 to 109; the sequence is QSPDINQGVDR. ATP-binding positions include 164 to 166, 230 to 231, Asp239, 245 to 246, Ala262, and Lys266; these read DAK, RF, and RK. An L-methionine-binding site is contributed by Asp239. Lys270 is an L-methionine binding site.

Belongs to the AdoMet synthase family. As to quaternary structure, homotetramer; dimer of dimers. It depends on Mg(2+) as a cofactor. The cofactor is K(+).

The protein localises to the cytoplasm. The catalysed reaction is L-methionine + ATP + H2O = S-adenosyl-L-methionine + phosphate + diphosphate. It functions in the pathway amino-acid biosynthesis; S-adenosyl-L-methionine biosynthesis; S-adenosyl-L-methionine from L-methionine: step 1/1. Functionally, catalyzes the formation of S-adenosylmethionine (AdoMet) from methionine and ATP. The overall synthetic reaction is composed of two sequential steps, AdoMet formation and the subsequent tripolyphosphate hydrolysis which occurs prior to release of AdoMet from the enzyme. This chain is S-adenosylmethionine synthase, found in Shewanella loihica (strain ATCC BAA-1088 / PV-4).